The chain runs to 116 residues: Nucleoid-associated protein PMM0020 (116 aa).

Basic and acidic residues predominate over residues 87–98; sequence ESSTTTMKERMN. Residues 87–116 form a disordered region; it reads ESSTTTMKERMNDLTGGLNLNLPGLDNNDS. Residues 99 to 116 are compositionally biased toward low complexity; sequence DLTGGLNLNLPGLDNNDS.

This sequence belongs to the YbaB/EbfC family. As to quaternary structure, homodimer.

The protein localises to the cytoplasm. It localises to the nucleoid. Functionally, binds to DNA and alters its conformation. May be involved in regulation of gene expression, nucleoid organization and DNA protection. In Prochlorococcus marinus subsp. pastoris (strain CCMP1986 / NIES-2087 / MED4), this protein is Nucleoid-associated protein PMM0020.